Consider the following 463-residue polypeptide: T-box transcription factor TBX1-B (463 aa).

2 disordered regions span residues 39 to 58 (SPSP…PCSA) and 75 to 102 (GASS…APVK). Positions 75–96 (GASSSSCASSTPGSGSTGSSSG) are enriched in low complexity. Residues 119-297 (LWDEFNQLGT…SNPFAKGFRD (179 aa)) constitute a DNA-binding region (T-box). 2 disordered regions span residues 320–343 (RSRN…RREY) and 367–406 (SPSL…HHHP). Over residues 323–332 (NPVSSPPQNG) the composition is skewed to polar residues. A compositionally biased stretch (basic and acidic residues) spans 333–343 (SDKDGDGRREY). Residues 367 to 380 (SPSLPVPGGLVPLS) show a composition bias toward low complexity. The Nuclear localization signal signature appears at 420–431 (KTRPAPYPLPSI).

Binds DNA as a dimer. Interacts with dscr6/ripply3.

It localises to the nucleus. Functionally, probable transcriptional regulator involved in developmental processes. Binds to the palindromic T site 5'-TTCACACCTAGGTGTGAA-3' DNA sequence. Induces pre-placodal ectoderm (PPE) gene expression in regions where RIPPLY3 is absent. Plays a role in the formation of the anteroposterior (AP) axis during embryonic development; required to establish the posterolateral border of the pre-placodal ectoderm (PPE) acting downstream of the retinoic acid receptor (RAR) signaling. In terms of biological role, probable transcriptional regulator involved in developmental processes. Binds to the palindromic T site 5'-TTCACACCTAGGTGTGAA-3' DNA sequence. Is required for normal development of the pharyngeal arch arteries. This chain is T-box transcription factor TBX1-B (tbx1-b), found in Xenopus laevis (African clawed frog).